We begin with the raw amino-acid sequence, 136 residues long: MAALLGRRFGMAAAALIALAALGSAASGTASKSSFVKSTVKAHDVVIFSKSYCPYCRRAKAVFKELELKKEPYVVELDQREDGWEIQDALSDMVGRRTVPQVFVHGKHLGGSDDTVEAYESGKLAKLLNIDVKEDL.

Positions 33–135 (SSFVKSTVKA…KLLNIDVKED (103 aa)) constitute a Glutaredoxin domain. C53 and C56 form a disulfide bridge.

The protein belongs to the glutaredoxin family. CPYC subfamily.

Its subcellular location is the cytoplasm. Functionally, has a glutathione-disulfide oxidoreductase activity in the presence of NADPH and glutathione reductase. Reduces low molecular weight disulfides and proteins. This Oryza sativa subsp. japonica (Rice) protein is Glutaredoxin-C8 (GRXC8).